Here is a 129-residue protein sequence, read N- to C-terminus: Glycine cleavage system H protein (129 aa).

In terms of domain architecture, Lipoyl-binding spans 24 to 106; that stretch reads EAVVGITEHA…YGAGWLFRIK (83 aa). The residue at position 65 (K65) is an N6-lipoyllysine.

The protein belongs to the GcvH family. The glycine cleavage system is composed of four proteins: P, T, L and H. It depends on (R)-lipoate as a cofactor.

In terms of biological role, the glycine cleavage system catalyzes the degradation of glycine. The H protein shuttles the methylamine group of glycine from the P protein to the T protein. In Aeromonas salmonicida (strain A449), this protein is Glycine cleavage system H protein.